Here is a 164-residue protein sequence, read N- to C-terminus: Inner membrane assembly complex subunit 17 (164 aa).

The transit peptide at 1–28 (MIKTAKISTLRLAITRNARNLSFTTLVR) directs the protein to the mitochondrion. Over 29–97 (SPEVDNSKIK…NEVPLKRFTR (69 aa)) the chain is Mitochondrial matrix. The helical transmembrane segment at 98–118 (PLWIFILMASTFYLGAHLVWW) threads the bilayer. The Mitochondrial intermembrane segment spans residues 119 to 164 (KLAYEKKEVELKHKVDSLETTLKDVMKEKATGPTPCNNKKSWYKFW). Residues 121–149 (AYEKKEVELKHKVDSLETTLKDVMKEKAT) are a coiled coil.

The protein belongs to the INA17 family. In terms of assembly, component of the inner membrane assembly (INA) complex, composed of INA17 and INA22. Interacts with a subset of F(1)F(0)-ATP synthase subunits of the F(1)-domain and the peripheral stalk.

The protein resides in the mitochondrion inner membrane. Functionally, component of the INA complex (INAC) that promotes the biogenesis of mitochondrial F(1)F(0)-ATP synthase. INAC facilitates the assembly of the peripheral stalk and promotes the assembly of the catalytic F(1)-domain with the membrane-embedded F(0)-domain. The protein is Inner membrane assembly complex subunit 17 of Candida glabrata (strain ATCC 2001 / BCRC 20586 / JCM 3761 / NBRC 0622 / NRRL Y-65 / CBS 138) (Yeast).